The chain runs to 287 residues: MSAIDGLPPLRDVIKRHDLAARKSLGQNFLLDLNLTARIARAAGPLDDVTVVEIGPGPGGLTRALLATGARRVIAIERDERALGALEEIAAHYPGRLEIVCADAMEFDPRPLLGGARARIVANLPYNIATPLLIGWLCAEPWPPWYDMMVLMFQREVAQRIVACEDDDAYGRLAVLSNWRCDTGMLFDIAPSAFVPQPKVTSSVVRLVPRSAPEPCNRAALEQVAAAAFGQRRKMLRQSLKALGVDPARLAAAAGIDPTRRAETVPVSGFVAMANELIDIRDTKNTP.

6 residues coordinate S-adenosyl-L-methionine: asparagine 28, leucine 30, glycine 55, glutamate 77, aspartate 103, and asparagine 123.

It belongs to the class I-like SAM-binding methyltransferase superfamily. rRNA adenine N(6)-methyltransferase family. RsmA subfamily.

The protein localises to the cytoplasm. It carries out the reaction adenosine(1518)/adenosine(1519) in 16S rRNA + 4 S-adenosyl-L-methionine = N(6)-dimethyladenosine(1518)/N(6)-dimethyladenosine(1519) in 16S rRNA + 4 S-adenosyl-L-homocysteine + 4 H(+). Specifically dimethylates two adjacent adenosines (A1518 and A1519) in the loop of a conserved hairpin near the 3'-end of 16S rRNA in the 30S particle. May play a critical role in biogenesis of 30S subunits. The polypeptide is Ribosomal RNA small subunit methyltransferase A (Rhodopseudomonas palustris (strain HaA2)).